The chain runs to 239 residues: RING finger protein 151 (239 aa).

The segment at 20 to 58 adopts an RING-type zinc-finger fold; sequence CSVCHGVLKRPTRLPCSHIFCKKCIFRWLARQNTCPCCR. Residues 101–156 form a TRAF-type zinc finger; sequence EHQDSCPFELMACPNEGCTVQVLRGVLDEHRQHCQQNGQQRCPLGCGSTLAALEGE.

Interacts with DTNBP1. In terms of tissue distribution, expressed in testis. Expressed in round spermatids of the stages VII-VIII semniniferous tubules. Expressed in elongating spermatids of stages VIII-IX seminiferous tubules (at protein level).

It localises to the cytoplasm. Its subcellular location is the nucleus. Its function is as follows. May be involved in acrosome formation of spermatids. This is RING finger protein 151 (Rnf151) from Mus musculus (Mouse).